A 145-amino-acid polypeptide reads, in one-letter code: Allergen Sin a 1 (145 aa).

The segment at 34–62 (SGSGPSWTLDDEFDFEDDMENPQGPQQRP) is disordered. Positions 40-54 (WTLDDEFDFEDDMEN) are excised as a propeptide. The span at 42–53 (LDDEFDFEDDME) shows a compositional bias: acidic residues.

The protein belongs to the 2S seed storage albumins family. The protein consists of two chains linked by disulfide bonds.

Its function is as follows. This is a 2S seed storage protein. The sequence is that of Allergen Sin a 1 from Sinapis alba (White mustard).